Consider the following 322-residue polypeptide: Aspartate carbamoyltransferase catalytic subunit (322 aa).

Carbamoyl phosphate contacts are provided by Arg65 and Thr66. Lys93 contacts L-aspartate. Arg115, His143, and Gln146 together coordinate carbamoyl phosphate. L-aspartate contacts are provided by Arg176 and Arg230. Residues Gly271 and Pro272 each contribute to the carbamoyl phosphate site.

It belongs to the aspartate/ornithine carbamoyltransferase superfamily. ATCase family. In terms of assembly, heterododecamer (2C3:3R2) of six catalytic PyrB chains organized as two trimers (C3), and six regulatory PyrI chains organized as three dimers (R2).

The catalysed reaction is carbamoyl phosphate + L-aspartate = N-carbamoyl-L-aspartate + phosphate + H(+). It functions in the pathway pyrimidine metabolism; UMP biosynthesis via de novo pathway; (S)-dihydroorotate from bicarbonate: step 2/3. In terms of biological role, catalyzes the condensation of carbamoyl phosphate and aspartate to form carbamoyl aspartate and inorganic phosphate, the committed step in the de novo pyrimidine nucleotide biosynthesis pathway. This is Aspartate carbamoyltransferase catalytic subunit from Brucella canis (strain ATCC 23365 / NCTC 10854 / RM-666).